Here is a 179-residue protein sequence, read N- to C-terminus: Cell division protein SepF (179 aa).

Residues 22–53 (LPYEKRDEPVFTPVNSSQEPALPMNQPSQSVG) form a disordered region. Polar residues predominate over residues 34-53 (PVNSSQEPALPMNQPSQSVG).

The protein belongs to the SepF family. In terms of assembly, homodimer. Interacts with FtsZ.

It localises to the cytoplasm. Cell division protein that is part of the divisome complex and is recruited early to the Z-ring. Probably stimulates Z-ring formation, perhaps through the cross-linking of FtsZ protofilaments. Its function overlaps with FtsA. The polypeptide is Cell division protein SepF (Streptococcus pneumoniae (strain P1031)).